The primary structure comprises 207 residues: Probable GTP-binding protein EngB (207 aa).

In terms of domain architecture, EngB-type G spans 23-197; sequence AGIEVVFAGR…ETVIGRWLFA (175 aa). GTP is bound by residues 31-38, 58-62, 76-79, 143-146, and 176-178; these read GRSNAGKS, GRTQL, DLPG, TKAD, and FSS. Positions 38 and 60 each coordinate Mg(2+).

The protein belongs to the TRAFAC class TrmE-Era-EngA-EngB-Septin-like GTPase superfamily. EngB GTPase family. The cofactor is Mg(2+).

Necessary for normal cell division and for the maintenance of normal septation. In Methylobacillus flagellatus (strain ATCC 51484 / DSM 6875 / VKM B-1610 / KT), this protein is Probable GTP-binding protein EngB.